A 165-amino-acid polypeptide reads, in one-letter code: Ribosome maturation factor RimM (165 aa).

One can recognise a PRC barrel domain in the interval 90–161; it reads EDEYFIVDLV…LITIRPSGEW (72 aa).

Belongs to the RimM family. Binds ribosomal protein uS19.

The protein localises to the cytoplasm. An accessory protein needed during the final step in the assembly of 30S ribosomal subunit, possibly for assembly of the head region. Essential for efficient processing of 16S rRNA. May be needed both before and after RbfA during the maturation of 16S rRNA. It has affinity for free ribosomal 30S subunits but not for 70S ribosomes. The sequence is that of Ribosome maturation factor RimM from Clostridium perfringens (strain ATCC 13124 / DSM 756 / JCM 1290 / NCIMB 6125 / NCTC 8237 / Type A).